A 255-amino-acid chain; its full sequence is Triosephosphate isomerase (255 aa).

9–11 provides a ligand contact to substrate; that stretch reads NWK. The active-site Electrophile is the His96. The active-site Proton acceptor is the Glu170. Substrate contacts are provided by residues Gly176, Ser216, and 237–238; that span reads GG.

This sequence belongs to the triosephosphate isomerase family. As to quaternary structure, homodimer.

It localises to the cytoplasm. The catalysed reaction is D-glyceraldehyde 3-phosphate = dihydroxyacetone phosphate. Its pathway is carbohydrate biosynthesis; gluconeogenesis. It participates in carbohydrate degradation; glycolysis; D-glyceraldehyde 3-phosphate from glycerone phosphate: step 1/1. In terms of biological role, involved in the gluconeogenesis. Catalyzes stereospecifically the conversion of dihydroxyacetone phosphate (DHAP) to D-glyceraldehyde-3-phosphate (G3P). This Magnetococcus marinus (strain ATCC BAA-1437 / JCM 17883 / MC-1) protein is Triosephosphate isomerase.